We begin with the raw amino-acid sequence, 1585 residues long: Histone acetyltransferase lsy-12 (1585 aa).

2 disordered regions span residues 1-37 and 279-491; these read MGKKRKPSPERSSDEDEVSTPSPKDRTARPTAAARRE and GPQH…DDPV. Residues 23-37 show a composition bias toward basic and acidic residues; it reads PKDRTARPTAAARRE. The segment covering 279–296 has biased composition (polar residues); it reads GPQHENVTVSENVLSTES. The segment covering 302 to 312 has biased composition (basic and acidic residues); that stretch reads TETKRLHDSSR. Composition is skewed to polar residues over residues 355 to 364 and 411 to 426; these read LLSNPHSTPV and SRLSALTIDTNRSNDL. Over residues 431 to 440 the composition is skewed to low complexity; it reads SAPSSSSAAS. Residues 453–469 are compositionally biased toward basic residues; it reads QQRRKGNQSAARSRKIK. The span at 477–491 shows a compositional bias: acidic residues; the sequence is QEDEPMELDSDDDPV. The region spanning 544-830 is the MYST-type HAT domain; the sequence is EQARLPERIH…YDPECLDWVP (287 aa). Residues 577-602 form a C2HC MYST-type zinc finger; that stretch reads LFICEFCFFYARSDEIMQNHAKKCML. The residue at position 644 (lysine 644) is an N6-acetyllysine; by autocatalysis. 685–689 is an acetyl-CoA binding site; sequence SCIMT. Glutamate 720 functions as the Proton donor/acceptor in the catalytic mechanism. 2 residues coordinate acetyl-CoA: serine 724 and lysine 815. 2 stretches are compositionally biased toward basic and acidic residues: residues 844 to 855 and 947 to 956; these read SKEEIEQDEQRR and VLDKSNIREE. Disordered stretches follow at residues 844–903, 927–1262, 1286–1373, and 1431–1507; these read SKEE…LKHE, EENK…IGKS, ESTA…ASNH, and HHQF…VHPQ. Over residues 977–999 the composition is skewed to polar residues; sequence NKCNNTESEPNPSGRKTSATSSG. Over residues 1011-1022 the composition is skewed to acidic residues; sequence TEEEEEDDDPTD. Residues 1029 to 1046 are compositionally biased toward basic and acidic residues; that stretch reads DDEKPFETSVNKEKNEKS. Positions 1047–1060 are enriched in basic residues; sequence RRGKKVSKKRRSVA. 2 stretches are compositionally biased toward basic and acidic residues: residues 1070 to 1081 and 1135 to 1151; these read VRDRDEPKKAEN and DIPKSDEDHQSTEAYDR. The segment covering 1164–1173 has biased composition (low complexity); it reads PTPDSYHSSP. Over residues 1185–1194 the composition is skewed to polar residues; sequence LMQAQQNIYQ. Residues 1196 to 1207 show a composition bias toward basic and acidic residues; that stretch reads NDCHFAENDSKP. 2 stretches are compositionally biased toward polar residues: residues 1298–1317 and 1324–1333; these read AGPSTSSHVTPQMSMINTTP and HPNSQQQATP. Residues 1482 to 1493 show a composition bias toward low complexity; sequence QHQQQQPQQPQQ.

The protein belongs to the MYST (SAS/MOZ) family.

It carries out the reaction L-lysyl-[protein] + acetyl-CoA = N(6)-acetyl-L-lysyl-[protein] + CoA + H(+). Functionally, probable histone acetyltransferase. Required to initiate and then maintain lateralized gene expression in the ASE sensory neurons. Involved in determining cell fate in the ASE neurons. The protein is Histone acetyltransferase lsy-12 of Caenorhabditis elegans.